Consider the following 469-residue polypeptide: Argininosuccinate lyase (469 aa).

It belongs to the lyase 1 family. Argininosuccinate lyase subfamily.

The protein localises to the cytoplasm. The enzyme catalyses 2-(N(omega)-L-arginino)succinate = fumarate + L-arginine. Its pathway is amino-acid biosynthesis; L-arginine biosynthesis; L-arginine from L-ornithine and carbamoyl phosphate: step 3/3. The protein is Argininosuccinate lyase of Paracoccus denitrificans (strain Pd 1222).